The following is a 148-amino-acid chain: Putative nickel-responsive regulator (148 aa).

The Ni(2+) site is built by His88, His99, His101, and Cys107.

It belongs to the transcriptional regulatory CopG/NikR family. In terms of assembly, homotetramer. Ni(2+) is required as a cofactor.

Its function is as follows. Transcriptional regulator. This chain is Putative nickel-responsive regulator, found in Helicobacter pylori (strain ATCC 700392 / 26695) (Campylobacter pylori).